Consider the following 1673-residue polypeptide: Glutamine and serine-rich protein 1 (1673 aa).

8 disordered regions span residues 265-322 (VIPS…SSQA), 411-543 (DQTR…KSYV), 872-892 (RHMS…LSIN), 923-961 (QDLP…PKEG), 1050-1081 (DENA…QYSS), 1149-1182 (VIRP…KAEE), 1216-1272 (LSAL…EQLA), and 1390-1476 (KSKV…PPPI). Polar residues predominate over residues 289 to 309 (SSKTPKSQSVVSPELTQSYTK). Composition is skewed to low complexity over residues 310 to 322 (SSQN…SSQA) and 411 to 458 (DQTR…PSDS). Polar residues predominate over residues 459-539 (YTSGQNQTLA…MQNSRTTADS (81 aa)). Positions 947–956 (NIKNPPNVNQ) are enriched in polar residues. Basic and acidic residues predominate over residues 1222–1233 (NSEKRLKTEGDK). Composition is skewed to polar residues over residues 1259-1272 (KPSQ…EQLA) and 1397-1411 (ARTT…SKVS). The span at 1435–1451 (TKAEPPPKKRKQWKEEF) shows a compositional bias: basic and acidic residues. Low complexity predominate over residues 1452–1462 (SSSQSDSSPDM).

The protein localises to the chromosome. Functionally, plays an essential role in the protection and maintenance of transcriptional and developmental programs. Protects many bivalent promoters and poised enhancers from hypermethylation, showing a marked preference for these regulatory elements over other types of promoters or enhancers. Mechanistically, cooperates with tet1 and binds to DNA in a common complex to inhibit the binding of dnmt3a/3b and therefore de novo methylation. This is Glutamine and serine-rich protein 1 (qser1) from Xenopus laevis (African clawed frog).